The sequence spans 176 residues: Nucleoside triphosphate/diphosphate phosphatase (176 aa).

The active-site Proton donor is the Arg23. Mg(2+)-binding residues include Asn87, Asp103, Asp105, Asp107, Asp120, and Glu123.

The protein belongs to the Ntdp family. The cofactor is Mg(2+).

The enzyme catalyses a ribonucleoside 5'-triphosphate + H2O = a ribonucleoside 5'-diphosphate + phosphate + H(+). It carries out the reaction a ribonucleoside 5'-diphosphate + H2O = a ribonucleoside 5'-phosphate + phosphate + H(+). Functionally, has nucleoside phosphatase activity towards nucleoside triphosphates and nucleoside diphosphates. This is Nucleoside triphosphate/diphosphate phosphatase from Bacillus licheniformis (strain ATCC 14580 / DSM 13 / JCM 2505 / CCUG 7422 / NBRC 12200 / NCIMB 9375 / NCTC 10341 / NRRL NRS-1264 / Gibson 46).